A 310-amino-acid polypeptide reads, in one-letter code: tRNA pseudouridine synthase B (310 aa).

The Nucleophile role is filled by Asp49.

The protein belongs to the pseudouridine synthase TruB family. Type 1 subfamily.

The catalysed reaction is uridine(55) in tRNA = pseudouridine(55) in tRNA. Functionally, responsible for synthesis of pseudouridine from uracil-55 in the psi GC loop of transfer RNAs. The chain is tRNA pseudouridine synthase B from Idiomarina loihiensis (strain ATCC BAA-735 / DSM 15497 / L2-TR).